The sequence spans 53 residues: Toxin CjTL7 (53 aa).

The N-terminal stretch at 1-22 (MMIKVLLLLSSALVLFTPEAEG) is a signal peptide. W51 carries the post-translational modification Tryptophan amide.

In terms of processing, contains 4 disulfide bonds.

Its subcellular location is the secreted. It is found in the nematocyst. Functionally, in vivo, only causes a weak change in behavior in shrimps (C.multidentata) (slight twitching of the walking legs), but no lethal effect is observed. No activity is observed when injected into fly larvae (M.domestica). The chain is Toxin CjTL7 from Epiactis japonica (Sea anemone).